Consider the following 1414-residue polypeptide: Protein KATNIP homolog (1414 aa).

Disordered regions lie at residues 1–32, 80–116, 139–158, 712–731, 756–783, 823–861, and 924–943; these read MHGK…DEKH, QQST…PGKI, GPNT…NEDQ, VSAT…NDLT, SSSS…TFTN, KMDN…SEKY, and QQQK…SLMP. Basic and acidic residues-rich tracts occupy residues 10–32 and 86–101; these read RKND…DEKH and LARE…DDGC. Residues 147-158 show a composition bias toward acidic residues; it reads DFESDDDMNEDQ. Polar residues-rich tracts occupy residues 832–843 and 924–940; these read NFSNQSSYNSDR and QQQK…NGSS.

The protein resides in the cytoplasm. Its subcellular location is the cytoskeleton. It localises to the cilium axoneme. The protein localises to the cilium basal body. Its function is as follows. May control cilium integrity. The polypeptide is Protein KATNIP homolog (Xenopus laevis (African clawed frog)).